Consider the following 364-residue polypeptide: Tyrosine--tRNA ligase (364 aa).

L-tyrosine is bound by residues Tyr41, Tyr167, Gln171, Asp174, and Gln189. Positions 238 to 242 (KMSKS) match the 'KMSKS' region motif. Lys241 is an ATP binding site.

It belongs to the class-I aminoacyl-tRNA synthetase family. TyrS type 4 subfamily. Homodimer.

It localises to the cytoplasm. The enzyme catalyses tRNA(Tyr) + L-tyrosine + ATP = L-tyrosyl-tRNA(Tyr) + AMP + diphosphate + H(+). Its function is as follows. Catalyzes the attachment of tyrosine to tRNA(Tyr) in a two-step reaction: tyrosine is first activated by ATP to form Tyr-AMP and then transferred to the acceptor end of tRNA(Tyr). This Sulfurisphaera tokodaii (strain DSM 16993 / JCM 10545 / NBRC 100140 / 7) (Sulfolobus tokodaii) protein is Tyrosine--tRNA ligase.